The sequence spans 1088 residues: Neural cell adhesion molecule 1-A (1088 aa).

Positions Met-1–Ala-19 are cleaved as a signal peptide. Ig-like C2-type domains lie at Leu-20–Asn-108, Gln-113–Gln-202, Pro-209–Thr-294, Pro-303–Gln-397, and Pro-400–Ser-484. The Extracellular portion of the chain corresponds to Leu-20–Thr-705. 2 disulfide bridges follow: Cys-41–Cys-93 and Cys-136–Cys-186. Residue Asn-82 is glycosylated (N-linked (GlcNAc...) asparagine). Heparin-binding positions include Arg-149 to Lys-153 and Lys-158 to Arg-162. A glycan (N-linked (GlcNAc...) asparagine) is linked at Asn-219. Cys-232 and Cys-282 are joined by a disulfide. N-linked (GlcNAc...) asparagine glycans are attached at residues Asn-310, Asn-341, Asn-417, Asn-443, and Asn-472. A disulfide bond links Cys-323 and Cys-379. A disulfide bridge links Cys-420 with Cys-473. Fibronectin type-III domains follow at residues Thr-493–Val-592 and Glu-594–Pro-690. The chain crosses the membrane as a helical span at residues Gly-706–Val-723. At Asp-724 to Ala-1088 the chain is on the cytoplasmic side. Positions Glu-758–Asn-784 are enriched in basic and acidic residues. Disordered stretches follow at residues Glu-758–Pro-802, Phe-829–Thr-1000, and Val-1024–Ala-1088. 3 stretches are compositionally biased toward low complexity: residues Ser-835 to Thr-847, Ala-854 to Thr-875, and Pro-913 to Asn-936. Polar residues predominate over residues Gln-965–Glu-974. Residues Ala-1046 to Val-1064 are compositionally biased toward basic and acidic residues. A compositionally biased stretch (polar residues) spans Asn-1076–Ala-1088.

Polysialylated by ST8SIA2 and ST8SIA4. Polysialylation modulates cell interactions by confering both attractive and repulsive properties that are highly regulated by ST8SIA2 and ST8SIA4. Polysialylation is formed on a-2,3-linked sialic acid of core glycans. As to expression, expressed in neuron and in presumptive neural tissue.

Its subcellular location is the cell membrane. In terms of biological role, this protein is a cell adhesion molecule involved in neuron-neuron adhesion, neurite fasciculation, outgrowth of neurites, etc. The chain is Neural cell adhesion molecule 1-A from Xenopus laevis (African clawed frog).